We begin with the raw amino-acid sequence, 90 residues long: U7-theraphotoxin-Hhn1a 3 (90 aa).

Residues Met1–Gly26 form the signal peptide. Positions Lys27–Glu50 are excised as a propeptide. 3 disulfides stabilise this stretch: Cys51–Cys65, Cys58–Cys70, and Cys64–Cys81.

It belongs to the neurotoxin 10 (Hwtx-1) family. 13 (Hntx-13) subfamily. In terms of tissue distribution, expressed by the venom gland.

The protein localises to the secreted. Functionally, ion channel inhibitor. The sequence is that of U7-theraphotoxin-Hhn1a 3 from Cyriopagopus hainanus (Chinese bird spider).